The primary structure comprises 351 residues: Probable cell division control protein 7 homolog 1 (351 aa).

In terms of domain architecture, Protein kinase spans 21 to 341; that stretch reads YTPIEKIGEG…ASDALSHPFF (321 aa). Residues 27-35 and Lys-50 contribute to the ATP site; that span reads IGEGSFSVV. Residue Asp-137 is the Proton acceptor of the active site.

The protein belongs to the protein kinase superfamily. Ser/Thr protein kinase family. CDC7 subfamily. The cofactor is Mg(2+).

The catalysed reaction is L-seryl-[protein] + ATP = O-phospho-L-seryl-[protein] + ADP + H(+). The enzyme catalyses L-threonyl-[protein] + ATP = O-phospho-L-threonyl-[protein] + ADP + H(+). Serine/threonine-protein kinase. Needed for the initiation of DNA synthesis during mitosis as well as for synaptonemal complex formation and commitment to recombination during meiosis. This Encephalitozoon cuniculi (strain GB-M1) (Microsporidian parasite) protein is Probable cell division control protein 7 homolog 1 (CDC7-1).